The following is a 479-amino-acid chain: Muscarinic acetylcholine receptor M4 (479 aa).

At 1-30 the chain is on the extracellular side; the sequence is MANFTPVNGSSANQSVRLVTTAHNHLETVE. 2 N-linked (GlcNAc...) asparagine glycosylation sites follow: Asn-8 and Asn-13. Residues 31–53 form a helical membrane-spanning segment; that stretch reads MVFIATVTGSLSLVTVVGNILVM. The Cytoplasmic segment spans residues 54-67; that stretch reads LSIKVNRQLQTVNN. Residues 68-88 form a helical membrane-spanning segment; the sequence is YFLFSLACADLIIGAFSMNLY. Topologically, residues 89-105 are extracellular; sequence TLYIIKGYWPLGAVVCD. Cysteines 104 and 184 form a disulfide. Residues 106 to 127 traverse the membrane as a helical segment; it reads LWLALDYVVSNASVMNLLIISF. Topologically, residues 128-147 are cytoplasmic; the sequence is DRYFCVTKPLTYPARRTTKM. The helical transmembrane segment at 148–170 threads the bilayer; sequence AGLMIAAAWVLSFVLWAPAILFW. Over 171–192 the chain is Extracellular; that stretch reads QFVVGKRTVPDNQCFIQFLSNP. Residues 193–215 traverse the membrane as a helical segment; it reads AVTFGTAIAAFYLPVVIMTVLYI. Residues 216–401 lie on the Cytoplasmic side of the membrane; the sequence is HISLASRSRV…AARERKVTRT (186 aa). Positions 271 to 334 are disordered; that stretch reads LEEAPPPALP…APTLQPRTLN (64 aa). Residues 274-285 show a composition bias toward pro residues; that stretch reads APPPALPPPPRP. Residues 293-303 are compositionally biased toward polar residues; it reads NESSSGSATQN. Low complexity predominate over residues 310 to 333; it reads TELSTTEAATTPALPAPTLQPRTL. The chain crosses the membrane as a helical span at residues 402-422; sequence IFAILLAFILTWTPYNVMVLV. Topologically, residues 423 to 436 are extracellular; the sequence is NTFCQSCIPERVWS. A helical transmembrane segment spans residues 437-456; sequence IGYWLCYVNSTINPACYALC. Topologically, residues 457–479 are cytoplasmic; it reads NATFKKTFRHLLLCQYRNIGTAR. A phosphothreonine mark is found at Thr-459, Thr-463, and Thr-477.

Belongs to the G-protein coupled receptor 1 family. Muscarinic acetylcholine receptor subfamily. CHRM4 sub-subfamily.

It is found in the cell membrane. Its subcellular location is the postsynaptic cell membrane. The muscarinic acetylcholine receptor mediates various cellular responses, including inhibition of adenylate cyclase, breakdown of phosphoinositides and modulation of potassium channels through the action of G proteins. Primary transducing effect is inhibition of adenylate cyclase. This Mus musculus (Mouse) protein is Muscarinic acetylcholine receptor M4 (Chrm4).